A 348-amino-acid chain; its full sequence is L-threonine 3-dehydrogenase (348 aa).

C42 provides a ligand contact to Zn(2+). Catalysis depends on charge relay system residues T44 and H47. Zn(2+) is bound by residues H67, E68, C97, C100, C103, and C111. NAD(+)-binding positions include L179, E199, R204, 266-268, and 291-292; these read LGL and IT.

Belongs to the zinc-containing alcohol dehydrogenase family. Homotetramer. Requires Zn(2+) as cofactor.

It localises to the cytoplasm. The enzyme catalyses L-threonine + NAD(+) = (2S)-2-amino-3-oxobutanoate + NADH + H(+). Its pathway is amino-acid degradation; L-threonine degradation via oxydo-reductase pathway; glycine from L-threonine: step 1/2. Functionally, catalyzes the NAD(+)-dependent oxidation of L-threonine to 2-amino-3-ketobutyrate. To a lesser extent, also catalyzes the oxidation of L-serine, D-threonine, butan-2,3-diol, butan-1,2-diol, and propan-1,2-diol and cannot oxidize other L-amino acids. Cannot utilize NADP(H) instead of NAD(H). This chain is L-threonine 3-dehydrogenase, found in Pyrococcus furiosus (strain ATCC 43587 / DSM 3638 / JCM 8422 / Vc1).